Consider the following 337-residue polypeptide: Ribosomal RNA small subunit methyltransferase H (337 aa).

Residues 35–37 (GGY), Asp54, Phe81, Asp102, and Gln109 each bind S-adenosyl-L-methionine. Residues 286–316 (PVGPSEAEAAANPRARSAKLRAGERTDAPAP) form a disordered region. A compositionally biased stretch (low complexity) spans 289–300 (PSEAEAAANPRA).

This sequence belongs to the methyltransferase superfamily. RsmH family.

It localises to the cytoplasm. It catalyses the reaction cytidine(1402) in 16S rRNA + S-adenosyl-L-methionine = N(4)-methylcytidine(1402) in 16S rRNA + S-adenosyl-L-homocysteine + H(+). Functionally, specifically methylates the N4 position of cytidine in position 1402 (C1402) of 16S rRNA. The polypeptide is Ribosomal RNA small subunit methyltransferase H (Methylobacterium sp. (strain 4-46)).